We begin with the raw amino-acid sequence, 213 residues long: Glutamine amidotransferase-like class 1 domain-containing protein 1 (213 aa).

The N-terminal stretch at 1–20 (MTSKPTCLIVASAASAGVSA) is a signal peptide.

The protein belongs to the peptidase C56 family. Homotetramer. Component of the FERRY complex.

It is found in the secreted. The protein localises to the early endosome. Functionally, component of the FERRY complex (Five-subunit Endosomal Rab5 and RNA/ribosome intermediary). The FERRY complex directly interacts with mRNAs and RAB5A, and functions as a RAB5A effector involved in the localization and the distribution of specific mRNAs most likely by mediating their endosomal transport. The complex recruits mRNAs and ribosomes to early endosomes through direct mRNA-interaction. In Danio rerio (Zebrafish), this protein is Glutamine amidotransferase-like class 1 domain-containing protein 1.